A 380-amino-acid chain; its full sequence is 4-hydroxy-3-methylbut-2-en-1-yl diphosphate synthase (flavodoxin) (380 aa).

Residues Cys-280, Cys-283, Cys-315, and Glu-322 each coordinate [4Fe-4S] cluster.

This sequence belongs to the IspG family. Requires [4Fe-4S] cluster as cofactor.

The catalysed reaction is (2E)-4-hydroxy-3-methylbut-2-enyl diphosphate + oxidized [flavodoxin] + H2O + 2 H(+) = 2-C-methyl-D-erythritol 2,4-cyclic diphosphate + reduced [flavodoxin]. Its pathway is isoprenoid biosynthesis; isopentenyl diphosphate biosynthesis via DXP pathway; isopentenyl diphosphate from 1-deoxy-D-xylulose 5-phosphate: step 5/6. Converts 2C-methyl-D-erythritol 2,4-cyclodiphosphate (ME-2,4cPP) into 1-hydroxy-2-methyl-2-(E)-butenyl 4-diphosphate. This Cutibacterium acnes (strain DSM 16379 / KPA171202) (Propionibacterium acnes) protein is 4-hydroxy-3-methylbut-2-en-1-yl diphosphate synthase (flavodoxin).